A 405-amino-acid polypeptide reads, in one-letter code: GTPase Obg (405 aa).

One can recognise an Obg domain in the interval 1-159 (MKFVDEVSIF…RDLKLELKVL (159 aa)). The interval 127 to 148 (NTRFKSSTNRAPRQTTPGKPGD) is disordered. The segment covering 129 to 143 (RFKSSTNRAPRQTTP) has biased composition (polar residues). The OBG-type G domain occupies 160–333 (ADVGLLGLPN…LSQAIMRYLD (174 aa)). GTP-binding positions include 166-173 (GLPNAGKS), 191-195 (FTTLV), 213-216 (DIPG), 283-286 (NKAD), and 314-316 (SAL). Mg(2+) contacts are provided by Ser173 and Thr193. The segment at 373–405 (LRRAGVKSVEEADDDDFDDDDDDEGGAEIIYVR) is disordered. Residues 383-398 (EADDDDFDDDDDDEGG) are compositionally biased toward acidic residues.

This sequence belongs to the TRAFAC class OBG-HflX-like GTPase superfamily. OBG GTPase family. In terms of assembly, monomer. Mg(2+) serves as cofactor.

It localises to the cytoplasm. An essential GTPase which binds GTP, GDP and possibly (p)ppGpp with moderate affinity, with high nucleotide exchange rates and a fairly low GTP hydrolysis rate. Plays a role in control of the cell cycle, stress response, ribosome biogenesis and in those bacteria that undergo differentiation, in morphogenesis control. This chain is GTPase Obg, found in Stutzerimonas stutzeri (strain A1501) (Pseudomonas stutzeri).